We begin with the raw amino-acid sequence, 600 residues long: uncharacterized protein (600 aa).

2 4Fe-4S ferredoxin-type domains span residues 14-44 (RLAI…MGEK) and 53-82 (GKPV…IIGL). ABC transporter domains follow at residues 77–318 (ISII…YLYG) and 348–563 (LLSY…LKEM). Residues 117–124 (GQNGIGKS) and 380–387 (GPNGIGKT) each bind ATP. A compositionally biased stretch (basic and acidic residues) spans 569–594 (RDPETGRPRANKEGSQRDIMQKEKGE). A disordered region spans residues 569–600 (RDPETGRPRANKEGSQRDIMQKEKGEYYYVDE).

Belongs to the ABC transporter superfamily.

This is an uncharacterized protein from Methanocaldococcus jannaschii (strain ATCC 43067 / DSM 2661 / JAL-1 / JCM 10045 / NBRC 100440) (Methanococcus jannaschii).